The primary structure comprises 521 residues: 2-isopropylmalate synthase (521 aa).

The 263-residue stretch at 12 to 274 folds into the Pyruvate carboxyltransferase domain; that stretch reads VIIFDTTLRD…WNKIDTTMLT (263 aa). Mn(2+)-binding residues include Asp-21, His-209, His-211, and Asn-245. A regulatory domain region spans residues 398–521; the sequence is KLLSLTVIAG…DLPVPEAAAS (124 aa).

It belongs to the alpha-IPM synthase/homocitrate synthase family. LeuA type 1 subfamily. As to quaternary structure, homodimer. It depends on Mn(2+) as a cofactor.

It is found in the cytoplasm. It carries out the reaction 3-methyl-2-oxobutanoate + acetyl-CoA + H2O = (2S)-2-isopropylmalate + CoA + H(+). The protein operates within amino-acid biosynthesis; L-leucine biosynthesis; L-leucine from 3-methyl-2-oxobutanoate: step 1/4. In terms of biological role, catalyzes the condensation of the acetyl group of acetyl-CoA with 3-methyl-2-oxobutanoate (2-ketoisovalerate) to form 3-carboxy-3-hydroxy-4-methylpentanoate (2-isopropylmalate). The polypeptide is 2-isopropylmalate synthase (Rhodopseudomonas palustris (strain BisB18)).